Consider the following 496-residue polypeptide: Serine/threonine-protein kinase Sgk3 (496 aa).

The 113-residue stretch at Ser12–His124 folds into the PX domain. The tract at residues Ser121–Ala157 is disordered. Phosphoserine occurs at positions 126 and 129. Over residues Lys139 to Pro151 the composition is skewed to polar residues. Residues Phe162–Phe419 enclose the Protein kinase domain. Residues Ile168 to Val176 and Lys191 contribute to the ATP site. Residues Lys195–Lys205 carry the Nuclear localization signal motif. Asp286 acts as the Proton acceptor in catalysis. Thr320 carries the post-translational modification Phosphothreonine; by PDPK1. The 77-residue stretch at Glu420–Leu496 folds into the AGC-kinase C-terminal domain. Ser486 is subject to Phosphoserine.

Belongs to the protein kinase superfamily. AGC Ser/Thr protein kinase family. As to quaternary structure, interacts with GSK3B and FLII. Interacts with PDPK1 in a phosphorylation-dependent manner. In terms of processing, activated by phosphorylation on Ser-486 by an unknown kinase (may be mTORC2 but not confirmed), transforming it into a substrate for PDPK1 which then phosphorylates it on Thr-320. As to expression, widely expressed, predominantly in the heart, spleen and 7-day embryo.

The protein localises to the cytoplasmic vesicle. It localises to the early endosome. Its subcellular location is the recycling endosome. The enzyme catalyses L-seryl-[protein] + ATP = O-phospho-L-seryl-[protein] + ADP + H(+). It carries out the reaction L-threonyl-[protein] + ATP = O-phospho-L-threonyl-[protein] + ADP + H(+). With respect to regulation, two specific sites, one in the kinase domain (Thr-320) and the other in the C-terminal regulatory region (Ser-486), need to be phosphorylated for its full activation. In terms of biological role, serine/threonine-protein kinase which is involved in the regulation of a wide variety of ion channels, membrane transporters, cell growth, proliferation, survival and migration. Up-regulates Na(+) channels: SCNN1A/ENAC and SCN5A, K(+) channels: KCNA3/KV1.3, KCNE1, KCNQ1 and KCNH2/HERG, epithelial Ca(2+) channels: TRPV5 and TRPV6, chloride channel: BSND, creatine transporter: SLC6A8, Na(+)/dicarboxylate cotransporter: SLC13A2/NADC1, Na(+)-dependent phosphate cotransporter: SLC34A2/NAPI-2B, amino acid transporters: SLC1A5/ASCT2 and SLC6A19, glutamate transporters: SLC1A3/EAAT1, SLC1A6/EAAT4 and SLC1A7/EAAT5, glutamate receptors: GRIA1/GLUR1 and GRIK2/GLUR6, Na(+)/H(+) exchanger: SLC9A3/NHE3, and the Na(+)/K(+) ATPase. Plays a role in the regulation of renal tubular phosphate transport and bone density. Phosphorylates NEDD4L and GSK3B. Positively regulates ER transcription activity through phosphorylation of FLII. Negatively regulates the function of ITCH/AIP4 via its phosphorylation and thereby prevents CXCR4 from being efficiently sorted to lysosomes. This Mus musculus (Mouse) protein is Serine/threonine-protein kinase Sgk3 (Sgk3).